The following is a 99-amino-acid chain: Plastocyanin (99 aa).

A Plastocyanin-like domain is found at 1 to 99; it reads VEILLGGEDG…AGMVGKVTVN (99 aa). The Cu cation site is built by H37, C84, H87, and M92.

The protein belongs to the plastocyanin family. It depends on Cu(2+) as a cofactor.

Its subcellular location is the plastid. It is found in the chloroplast thylakoid membrane. In terms of biological role, participates in electron transfer between P700 and the cytochrome b6-f complex in photosystem I. The protein is Plastocyanin (PETE) of Sambucus nigra (European elder).